A 254-amino-acid polypeptide reads, in one-letter code: Axonemal dynein light intermediate polypeptide 1 (254 aa).

A disordered region spans residues 1-55 (MIPPADSLLKHDNPVLISKNTERKSPKSRPLKVSSPQTVLTAPVPPPPKPKTPLL). The stretch at 175–245 (ALQAEQGKSD…KRTNQQLKAQ (71 aa)) forms a coiled coil.

Belongs to the inner dynein arm light chain family.

The protein localises to the cell projection. It localises to the cilium. It is found in the flagellum. Its subcellular location is the dynein axonemal particle. The protein resides in the cytoplasm. Functionally, involved in sperm flagellum assembly. This chain is Axonemal dynein light intermediate polypeptide 1, found in Xenopus laevis (African clawed frog).